Here is a 187-residue protein sequence, read N- to C-terminus: Large ribosomal subunit protein uL5 (187 aa).

The protein belongs to the universal ribosomal protein uL5 family. Part of the 50S ribosomal subunit; part of the 5S rRNA/L5/L18/L25 subcomplex. Contacts the 5S rRNA and the P site tRNA. Forms a bridge to the 30S subunit in the 70S ribosome.

This is one of the proteins that bind and probably mediate the attachment of the 5S RNA into the large ribosomal subunit, where it forms part of the central protuberance. In the 70S ribosome it contacts protein S13 of the 30S subunit (bridge B1b), connecting the 2 subunits; this bridge is implicated in subunit movement. Contacts the P site tRNA; the 5S rRNA and some of its associated proteins might help stabilize positioning of ribosome-bound tRNAs. This Mycobacterium bovis (strain BCG / Tokyo 172 / ATCC 35737 / TMC 1019) protein is Large ribosomal subunit protein uL5.